We begin with the raw amino-acid sequence, 339 residues long: NADP-dependent dehydrogenase M3 (339 aa).

NADP(+)-binding residues include serine 49, isoleucine 51, aspartate 93, tyrosine 206, lysine 210, isoleucine 240, and glutamine 244. Tyrosine 206 functions as the Proton acceptor in the catalytic mechanism. The active-site Lowers pKa of active site Tyr is lysine 210.

The protein belongs to the short-chain dehydrogenases/reductases (SDR) family. As to quaternary structure, homodimer.

The protein localises to the cytoplasm. It is found in the cytosol. It participates in secondary metabolite biosynthesis. Functionally, NADP-dependent dehydrogenase; part of the gene cluster that mediates the biosynthesis of squalestatin S1 (SQS1, also known as zaragozic acid A), a heavily oxidized fungal polyketide that offers potent cholesterol lowering activity by targeting squalene synthase (SS). SQS1 is composed of a 2,8-dioxobicyclic[3.2.1]octane-3,4,5-tricarboxyclic acid core that is connected to two lipophilic polyketide arms. These initial steps feature the priming of an unusual benzoic acid starter unit onto the highly reducing polyketide synthase pks2, followed by oxaloacetate extension and product release to generate a tricarboxylic acid containing product. The phenylalanine ammonia lyase (PAL) M7 and the acyl-CoA ligase M9 are involved in transforming phenylalanine into benzoyl-CoA. The citrate synthase-like protein R3 is involved in connecting the C-alpha-carbons of the hexaketide chain and oxaloacetate to afford the tricarboxylic acid unit. The potential hydrolytic enzymes, M8 and M10, are in close proximity to pks2 and may participate in product release. On the other side, the tetraketide arm is synthesized by a the squalestatin tetraketide synthase pks1 and enzymatically esterified to the core in the last biosynthetic step, by the acetyltransferase M4. The biosynthesis of the tetraketide must involve 3 rounds of chain extension. After the first and second rounds methyl-transfer occurs, and in all rounds of extension the ketoreductase and dehydratase are active. The enoyl reductase and C-MeT of pks1 are not active in the final round of extension. The acetyltransferase M4 appears to have a broad substrate selectivity for its acyl CoA substrate, allowing the in vitro synthesis of novel squalestatins. The biosynthesis of SQS1 requires several oxidative steps likely performed by oxidoreductases M1, R1 and R2. Finally, in support of the identification of the cluster as being responsible for SQS1 production, the cluster contains a gene encoding a putative squalene synthase (SS) R6, suggesting a likely mechanism for self-resistance. The sequence is that of NADP-dependent dehydrogenase M3 from Phoma sp. (strain ATCC 20986 / MF5453).